The primary structure comprises 252 residues: MNVKVYNLDGSEKGDIELPAVFETEYRPDLIKRAVISSLTAKLQPKGCDAFAGYRTSAKSIGKGHGKARVRRTAQGAGAFVPQAVGGRRAHPPKVEKILFERINRKERLKALASAIAASANPEIVSARGHKIEGVPSLPLVVNAEFESLAKTKEVLGVFTALKLDADLERAKDGVKIKAGRAKLRGRKYKKPKSVLVVVGDACDAVAASRNLAGVDVITANDLSAIHIAPGTMAGRLTLWTESAIEKLNGRF.

It belongs to the universal ribosomal protein uL4 family. In terms of assembly, part of the 50S ribosomal subunit.

In terms of biological role, one of the primary rRNA binding proteins, this protein initially binds near the 5'-end of the 23S rRNA. It is important during the early stages of 50S assembly. It makes multiple contacts with different domains of the 23S rRNA in the assembled 50S subunit and ribosome. Functionally, forms part of the polypeptide exit tunnel. This is Large ribosomal subunit protein uL4 from Methanococcus maripaludis (strain C6 / ATCC BAA-1332).